A 1097-amino-acid polypeptide reads, in one-letter code: Mitochondrial distribution and morphology protein 34 (1097 aa).

One can recognise an SMP-LTD domain in the interval 1 to 198 (MSFNFKWPTF…LPGIIHRLSQ (198 aa)). Disordered stretches follow at residues 204–305 (EAKS…PLHS), 317–343 (AAFPDIENYDPTYGLRPDDLPTHSGFS), 390–427 (QSDDEGSEAEQSQDAHSSSHDGKHDEGDATTDSDLDAV), 480–520 (DDQP…TSSL), 556–600 (PEVD…SSRT), 645–675 (LDAERSSVSGSDSRRGLTNPTSRESSYRDLS), 716–817 (GQNA…SPGV), and 923–1097 (GSSA…AIRE). Residues 205-229 (AKSEKDKVKQKAEAEEPPARSREPT) show a composition bias toward basic and acidic residues. A compositionally biased stretch (basic residues) spans 252 to 263 (RKSHSKAKKHSR). A compositionally biased stretch (low complexity) spans 274–283 (SPCQSPQRPR). A compositionally biased stretch (basic residues) spans 284-293 (QSPRRPRHVA). A compositionally biased stretch (basic and acidic residues) spans 406 to 416 (SSSHDGKHDEG). 2 stretches are compositionally biased toward low complexity: residues 508–519 (SSRSDRSACTSS) and 572–586 (GGTPSTRTGTTRFGS). A compositionally biased stretch (polar residues) spans 662–675 (TNPTSRESSYRDLS). The span at 759-779 (GMSATPARTRASAAASARSRP) shows a compositional bias: low complexity. The segment covering 784–796 (YATSPPGDSSGWQ) has biased composition (polar residues). Residues 923-943 (GSSAASGTGTTSGSSQTGANA) show a composition bias toward low complexity. A compositionally biased stretch (polar residues) spans 1004–1024 (SNKPNNTSTGQGEDSQDNSAA). Residues 1045–1059 (ASGSSASSAITDSSS) show a composition bias toward low complexity.

It belongs to the MDM34 family. In terms of assembly, component of the ER-mitochondria encounter structure (ERMES) or MDM complex, composed of MMM1, MDM10, MDM12 and MDM34.

The protein localises to the mitochondrion outer membrane. Component of the ERMES/MDM complex, which serves as a molecular tether to connect the endoplasmic reticulum (ER) and mitochondria. Components of this complex are involved in the control of mitochondrial shape and protein biogenesis, and function in nonvesicular lipid trafficking between the ER and mitochondria. MDM34 is required for the interaction of the ER-resident membrane protein MMM1 and the outer mitochondrial membrane-resident beta-barrel protein MDM10. The protein is Mitochondrial distribution and morphology protein 34 of Mycosarcoma maydis (Corn smut fungus).